The primary structure comprises 45 residues: Omega-hexatoxin-Hv2a (45 aa).

3 disulfide bridges follow: cysteine 4-cysteine 18, cysteine 11-cysteine 24, and cysteine 17-cysteine 29.

Belongs to the neurotoxin 15 family. 02 (omega-actx) subfamily. As to expression, expressed by the venom gland.

It localises to the secreted. Functionally, potent inhibitor of insect (bee brain), but not mammalian (rat trigeminal neurons), voltage-gated calcium channels (Cav). In vivo, injection into lone star ticks (Amblyomma americanum) induces curling of all eight legs into closed loops, followed by death. This Hadronyche versuta (Blue mountains funnel-web spider) protein is Omega-hexatoxin-Hv2a.